Consider the following 134-residue polypeptide: D-ribose pyranase (134 aa).

His-20 functions as the Proton donor in the catalytic mechanism. Substrate contacts are provided by residues Asp-28, His-101, and 123–125 (YSN).

This sequence belongs to the RbsD / FucU family. RbsD subfamily. In terms of assembly, homodecamer.

It localises to the cytoplasm. It carries out the reaction beta-D-ribopyranose = beta-D-ribofuranose. The protein operates within carbohydrate metabolism; D-ribose degradation; D-ribose 5-phosphate from beta-D-ribopyranose: step 1/2. Catalyzes the interconversion of beta-pyran and beta-furan forms of D-ribose. This Pseudomonas entomophila (strain L48) protein is D-ribose pyranase.